We begin with the raw amino-acid sequence, 334 residues long: L-lactate dehydrogenase B chain (334 aa).

Residue alanine 2 is modified to N-acetylalanine. Lysine 7 carries the N6-acetyllysine modification. Serine 11 and serine 44 each carry phosphoserine. NAD(+)-binding positions include 30-58 (GQVGMACAISILGKSLADELALVDVLEDK) and arginine 100. An N6-acetyllysine modification is found at lysine 58. A substrate-binding site is contributed by arginine 107. Residue lysine 119 is modified to N6-acetyllysine. Residue asparagine 139 participates in NAD(+) binding. Asparagine 139 and arginine 170 together coordinate substrate. Histidine 194 (proton acceptor) is an active-site residue. Phosphotyrosine is present on tyrosine 240. Position 249 (threonine 249) interacts with substrate. Lysine 329 is modified (N6-acetyllysine).

This sequence belongs to the LDH/MDH superfamily. LDH family. In terms of assembly, homotetramer. Interacts with PTEN upstream reading frame protein MP31; the interaction leads to inhibition of mitochondrial lactate dehydrogenase activity, preventing conversion of lactate to pyruvate in mitochondria.

Its subcellular location is the cytoplasm. The protein resides in the mitochondrion inner membrane. It catalyses the reaction (S)-lactate + NAD(+) = pyruvate + NADH + H(+). The protein operates within fermentation; pyruvate fermentation to lactate; (S)-lactate from pyruvate: step 1/1. Functionally, interconverts simultaneously and stereospecifically pyruvate and lactate with concomitant interconversion of NADH and NAD(+). The sequence is that of L-lactate dehydrogenase B chain (Ldhb) from Mus musculus (Mouse).